The primary structure comprises 750 residues: Photosystem I P700 chlorophyll a apoprotein A1 (750 aa).

Transmembrane regions (helical) follow at residues 70 to 93 (VFSA…FHGA), 156 to 179 (LYCT…FHYH), 195 to 219 (LNHH…HVSL), 291 to 309 (IAHH…GHMY), 346 to 369 (WHAQ…HHMY), 385 to 411 (LSLF…IFMV), 433 to 455 (AIIS…LYIH), and 531 to 549 (FLVH…LILL). [4Fe-4S] cluster-binding residues include Cys-573 and Cys-582. A run of 2 helical transmembrane segments spans residues 589-610 (HVFL…HFSW) and 664-686 (LSAY…MFLF). His-675 serves as a coordination point for chlorophyll a'. Residues Met-683 and Tyr-691 each contribute to the chlorophyll a site. Trp-692 contributes to the phylloquinone binding site. A helical transmembrane segment spans residues 724 to 744 (AVGVTHYLLGGIATTWAFFLA).

The protein belongs to the PsaA/PsaB family. The PsaA/B heterodimer binds the P700 chlorophyll special pair and subsequent electron acceptors. PSI consists of a core antenna complex that captures photons, and an electron transfer chain that converts photonic excitation into a charge separation. The eukaryotic PSI reaction center is composed of at least 11 subunits. It depends on P700 is a chlorophyll a/chlorophyll a' dimer, A0 is one or more chlorophyll a, A1 is one or both phylloquinones and FX is a shared 4Fe-4S iron-sulfur center. as a cofactor.

Its subcellular location is the plastid. The protein resides in the chloroplast thylakoid membrane. It catalyses the reaction reduced [plastocyanin] + hnu + oxidized [2Fe-2S]-[ferredoxin] = oxidized [plastocyanin] + reduced [2Fe-2S]-[ferredoxin]. Functionally, psaA and PsaB bind P700, the primary electron donor of photosystem I (PSI), as well as the electron acceptors A0, A1 and FX. PSI is a plastocyanin-ferredoxin oxidoreductase, converting photonic excitation into a charge separation, which transfers an electron from the donor P700 chlorophyll pair to the spectroscopically characterized acceptors A0, A1, FX, FA and FB in turn. Oxidized P700 is reduced on the lumenal side of the thylakoid membrane by plastocyanin. The protein is Photosystem I P700 chlorophyll a apoprotein A1 of Panax ginseng (Korean ginseng).